The following is a 625-amino-acid chain: Chaperone protein HtpG (625 aa).

Residues 1 to 337 (MSTNQETRGF…TNDLPLNVSR (337 aa)) form an a; substrate-binding region. The interval 338–554 (EILQENKITA…NDEMTTQMAK (217 aa)) is b. Residues 555–625 (LFAAMGQKAP…FIKRMNKLLG (71 aa)) are c.

It belongs to the heat shock protein 90 family. As to quaternary structure, homodimer.

It localises to the cytoplasm. Its function is as follows. Molecular chaperone. Has ATPase activity. This is Chaperone protein HtpG from Actinobacillus pleuropneumoniae serotype 5b (strain L20).